The primary structure comprises 189 residues: Rho-related protein racM (189 aa).

12–19 is a GTP binding site; sequence GDYGVGKT. The short motif at 35 to 43 is the Effector region element; sequence YVPTALDNF. GTP contacts are provided by residues 60 to 64 and 118 to 121; these read DTAGG and TKID. The residue at position 186 (C186) is a Cysteine methyl ester. C186 is lipidated: S-geranylgeranyl cysteine. Residues 187 to 189 constitute a propeptide, removed in mature form; it reads IIL.

It belongs to the small GTPase superfamily. Rho family.

It is found in the cell membrane. This Dictyostelium discoideum (Social amoeba) protein is Rho-related protein racM (racM).